The primary structure comprises 447 residues: MLHYEDRIDLYDERGKLLEENVPLEAISPLKNPTIEKIVNDIKRSVAINLAGIENALKTGAVGGKACFCPGRELDLPIVENAEIIAEKIKRMVQIEEDDDTVVKLINGGKQLLLQLPSKRLRVAADYTVSALIGGGATVQAIVDAFDVDMFDAPVVKTAVMGRYPQTVDFHGANIATLLGPPVLLEGLGYGLRNIMANHIVAVTRKKTLNAVALASILEQTAMFETGDALGAFERLHLLGLAFQGLNANNLTYELVKENGKDGTVGTVVASVVERALEDGVIRPLKTMPSGFTVYEPVDWALWNAYAASGLVAAVIVNVGAARAAQGVASTVLYYNDILEYETGLPSVDFGRAEGTAVGFSFFSHSIYGGGGPGTFHGNHVVTRHSKGFAIPCAAAAMCLDAGTQMFSVERTSALVGTVYSAIDHLREPLKYVAEGAVEVKEKEKVI.

A coenzyme M-binding site is contributed by Tyr-368. Gly-370 contacts coenzyme B.

The protein belongs to the methyl-coenzyme M reductase beta subunit family. As to quaternary structure, MCR is a hexamer of two alpha, two beta, and two gamma chains, forming a dimer of heterotrimers. Coenzyme F430 is required as a cofactor.

It catalyses the reaction coenzyme B + methyl-coenzyme M = methane + coenzyme M-coenzyme B heterodisulfide. It participates in one-carbon metabolism; methyl-coenzyme M reduction; methane from methyl-coenzyme M: step 1/1. Its function is as follows. Component of the methyl-coenzyme M reductase (MCR) I that catalyzes the reductive cleavage of methyl-coenzyme M (CoM-S-CH3 or 2-(methylthio)ethanesulfonate) using coenzyme B (CoB or 7-mercaptoheptanoylthreonine phosphate) as reductant which results in the production of methane and the mixed heterodisulfide of CoB and CoM (CoM-S-S-CoB). This is the final step in methanogenesis. The polypeptide is Methyl-coenzyme M reductase II subunit beta (mrtB) (Methanocaldococcus jannaschii (strain ATCC 43067 / DSM 2661 / JAL-1 / JCM 10045 / NBRC 100440) (Methanococcus jannaschii)).